Reading from the N-terminus, the 86-residue chain is Toxin Td1 (86 aa).

The N-terminal stretch at methionine 1–cysteine 20 is a signal peptide. Positions lysine 21–glycine 83 constitute an LCN-type CS-alpha/beta domain. Disulfide bonds link cysteine 31–cysteine 82, cysteine 35–cysteine 57, cysteine 43–cysteine 63, and cysteine 47–cysteine 65. A Lysine amide modification is found at lysine 84.

As to expression, expressed by the venom gland.

It localises to the secreted. Functionally, beta toxins bind voltage-independently at site-4 of sodium channels (Nav) and shift the voltage of activation toward more negative potentials thereby affecting sodium channel activation and promoting spontaneous and repetitive firing. The polypeptide is Toxin Td1 (Tityus discrepans (Venezuelan scorpion)).